The sequence spans 102 residues: uncharacterized protein (102 aa).

Residues 1–13 (PSSSQALSVPSLS) show a composition bias toward low complexity. The disordered stretch occupies residues 1 to 24 (PSSSQALSVPSLSSEKKTASPTCV).

This is an uncharacterized protein from Human cytomegalovirus (strain AD169) (HHV-5).